Reading from the N-terminus, the 589-residue chain is MRTHFCGLINETLIGHTVTLAGWTDVARNLGGVCFIDLRDHEGIVQITVDSRAIDQNNSELFRVASGLSYEDVLQVEGVVHARHAVNDKIKTGKVEVIATKIKILNKAAPLPFHAHENPGEDIRLKYRYLDLRRPEMQRMQRTRIKLVQALRRHLDMHGFQDIETPILTKATPEGARDFLVPARMHPGEFYALPQSPQLFKQILMVAGFDRYYQIARCFRDEALRADRQLEFTQLDMEFAFVSERDVQDFVEEMIRRVFKEVAGIELDTTFPRMTWKEAMRRFGSDKPDMRINLELIDVAALVADSTFTPFTNAVAHPNGRVAALRIPRGAVLSRKQIDEYAAYTAKYGATGLAYAKLAPTGEITSPIAKFFSEDAFAALLSHIGAEKGDIVFFGAGNYNKVSDFMGALRLKAGKDFALITADWRPLWVTDFPMFEWDEEAQRYVALHHPFTAPAAINDIDELRTHARTALSRGYDMVLNGNEIGGGSIRIHRPEMQRAVFELLGITEDEARAKFGFLLDALNYGAPPHGGIAFGIDRIAALIAGTESIRDVIPFPKTTGAQCLMTDAPSPISEEQLSEIHVITKKLTP.

E174 contributes to the L-aspartate binding site. An aspartate region spans residues 198–201; that stretch reads QLFK. R220 lines the L-aspartate pocket. Residues 220 to 222 and Q229 contribute to the ATP site; that span reads RDE. H448 serves as a coordination point for L-aspartate. An ATP-binding site is contributed by E483. R490 contacts L-aspartate. ATP is bound at residue 535 to 538; sequence GIDR.

Belongs to the class-II aminoacyl-tRNA synthetase family. Type 1 subfamily. In terms of assembly, homodimer.

It is found in the cytoplasm. The enzyme catalyses tRNA(Asp) + L-aspartate + ATP = L-aspartyl-tRNA(Asp) + AMP + diphosphate. Its function is as follows. Catalyzes the attachment of L-aspartate to tRNA(Asp) in a two-step reaction: L-aspartate is first activated by ATP to form Asp-AMP and then transferred to the acceptor end of tRNA(Asp). The polypeptide is Aspartate--tRNA ligase (Xylella fastidiosa (strain M23)).